Here is an 84-residue protein sequence, read N- to C-terminus: Small ribosomal subunit protein bS18 (84 aa).

Belongs to the bacterial ribosomal protein bS18 family. In terms of assembly, part of the 30S ribosomal subunit. Forms a tight heterodimer with protein bS6.

In terms of biological role, binds as a heterodimer with protein bS6 to the central domain of the 16S rRNA, where it helps stabilize the platform of the 30S subunit. The polypeptide is Small ribosomal subunit protein bS18 (Dictyoglomus turgidum (strain DSM 6724 / Z-1310)).